The following is a 418-amino-acid chain: Lysophosphatidic acid phosphatase type 6 (418 aa).

Residues 1-25 (MRVWVPVGVLTSLAYCFHQRRVALA) constitute a mitochondrion transit peptide. The tract at residues 51–161 (RHGARSPLKP…VFIRSTNMFR (111 aa)) is substrate binding. Catalysis depends on histidine 52, which acts as the Nucleophile. Catalysis depends on aspartate 327, which acts as the Proton donor.

It belongs to the histidine acid phosphatase family. As to quaternary structure, monomer.

The protein localises to the mitochondrion. The catalysed reaction is a phosphate monoester + H2O = an alcohol + phosphate. The enzyme catalyses 1-(9Z-octadecenoyl)-sn-glycero-3-phosphate + H2O = 1-(9Z-octadecenoyl)-sn-glycerol + phosphate. Functionally, hydrolyzes lysophosphatidic acid (LPA) containing a medium length fatty acid chain to the corresponding monoacylglycerol. Has highest activity with lysophosphatidic acid containing myristate (C14:0), monounsaturated oleate (C18:1) or palmitate (C16:0), and lower activity with C18:0 and C6:0 lysophosphatidic acid. The sequence is that of Lysophosphatidic acid phosphatase type 6 (Acp6) from Mus musculus (Mouse).